Reading from the N-terminus, the 182-residue chain is Histone deacetylase complex subunit SAP30L (182 aa).

N-acetylmethionine is present on Met1. Acidic residues predominate over residues 1-10; the sequence is MNGFSTEEDS. A disordered region spans residues 1 to 22; sequence MNGFSTEEDSREGPPAAPAAAP. 2 disulfides stabilise this stretch: Cys28–Cys29 and Cys37–Cys73. The Atypical zinc finger occupies 28–76; the sequence is CCLIADGERCVRPAGNASFSKRVQKSISQKKLKLDIDKSVRHLYICDFH. A Glycyl lysine isopeptide (Lys-Gly) (interchain with G-Cter in SUMO2) cross-link involves residue Lys48. The interval 84–103 is disordered; that stretch reads RNKRKRKASDDGGDSPEHDA. Residues 85 to 90 carry the Nuclear localization signal (NLS) motif; that stretch reads NKRKRK. Residues 87-89 are important for DNA and phosphoinositide binding; the sequence is RKR. A phosphoserine mark is found at Ser92 and Ser98. Residues Lys154, Lys165, and Lys174 each participate in a glycyl lysine isopeptide (Lys-Gly) (interchain with G-Cter in SUMO2) cross-link.

Belongs to the SAP30 family. In terms of assembly, interacts with components of the histone deacetylase complex SIN3A, HDAC1 and HDAC2. Binds histones and nucleosomes. Interacts with FEZ1.

It is found in the nucleus. The protein localises to the nucleolus. Functions as a transcription repressor, probably via its interaction with histone deacetylase complexes. Involved in the functional recruitment of the class 1 Sin3-histone deacetylase complex (HDAC) to the nucleolus. Binds DNA, apparently without sequence-specificity, and bends bound double-stranded DNA. Binds phosphoinositol phosphates (phosphoinositol 3-phosphate, phosphoinositol 4-phosphate and phosphoinositol 5-phosphate) via the same basic sequence motif that mediates DNA binding and nuclear import. This Mus musculus (Mouse) protein is Histone deacetylase complex subunit SAP30L (Sap30l).